The primary structure comprises 856 residues: MAYTPMIKQYKEIKEQNKDCILFFRLGDFYEMFFDDALIASKELEIVLTQRDCGENKKCPMCGIPYHVSDVYINKLVSKGYKVAICEQLEDPKLVKGLVKRGIIKIYTPATVIENENSDTGNFNYLMSISKKSNEVAISYIDISTGDVSYTNTTSDDIYKIIENEISKITPKEIIFNDHEFSTNSLETIASKFSIVLTTVNNGTDSIDFINSKITYDNTNSETTNICVANLLKYVFRYQDDLVHINSSRKYYINEFMEIDSNSVINLEIQKNLYTNSKNGSLFGVLNHTKTSMGSRLLHSYLERPLMDKEEILIRQNRVEEIFEDYELLVNLENCLDGIYDLDRLIAKLSYKSANAKDLIALKVSIEKIPYLKNLLNCNKKNVQLIGEKLDDLRDIYDLIDKSIVDDPPVILTEGNLIKPNFSNELDQLRYNRVNGKNELVEYEMSEKDRLGIKNLKIVFNKKLGYFIDVTKSNLNKVGEDYEKRQTLTNSSRFKTKQLEAIESKILDSEDEIFELEYKIFEDIRKIILENLSRIKKSADLIAIIDVSNSLAKCAYLNNYIKPDINTYGLIDVLESRHPIVELSVGQSEFITNDILIGSGKNDIQLITGPNMSGKSTYLRQVALICILNQIGSFVPATKANISIVDKIFTRIGSSDNLFKGESTFMVEMKEMSNIIKYATSNSLLVLDEIGRGTSTYDGLSLAWAIVEYISKDIKAKTLFATHYHELTELEKKLDNLINMKVDIKETNDSIIFLRKITRGSTDKSYGIEVAELAGMPKTLIKRAKSILKEIDKEDTKIDLPIADFAVQNEMEDDKNIHELKDFKDEIKNINVNEITPIQSLQLLNELVIKASKLGD.

Residue glycine 609–serine 616 coordinates ATP.

It belongs to the DNA mismatch repair MutS family.

This protein is involved in the repair of mismatches in DNA. It is possible that it carries out the mismatch recognition step. This protein has a weak ATPase activity. The sequence is that of DNA mismatch repair protein MutS from Finegoldia magna (strain ATCC 29328 / DSM 20472 / WAL 2508) (Peptostreptococcus magnus).